We begin with the raw amino-acid sequence, 397 residues long: CCA-adding enzyme (397 aa).

ATP is bound by residues glycine 26 and arginine 29. Residues glycine 26 and arginine 29 each coordinate CTP. Residues aspartate 39 and aspartate 41 each coordinate Mg(2+). ATP is bound by residues arginine 110, aspartate 153, arginine 156, arginine 159, and arginine 162. Positions 110, 153, 156, 159, and 162 each coordinate CTP.

The protein belongs to the tRNA nucleotidyltransferase/poly(A) polymerase family. Bacterial CCA-adding enzyme type 3 subfamily. As to quaternary structure, homodimer. Mg(2+) serves as cofactor.

The catalysed reaction is a tRNA precursor + 2 CTP + ATP = a tRNA with a 3' CCA end + 3 diphosphate. It catalyses the reaction a tRNA with a 3' CCA end + 2 CTP + ATP = a tRNA with a 3' CCACCA end + 3 diphosphate. Catalyzes the addition and repair of the essential 3'-terminal CCA sequence in tRNAs without using a nucleic acid template. Adds these three nucleotides in the order of C, C, and A to the tRNA nucleotide-73, using CTP and ATP as substrates and producing inorganic pyrophosphate. tRNA 3'-terminal CCA addition is required both for tRNA processing and repair. Also involved in tRNA surveillance by mediating tandem CCA addition to generate a CCACCA at the 3' terminus of unstable tRNAs. While stable tRNAs receive only 3'-terminal CCA, unstable tRNAs are marked with CCACCA and rapidly degraded. This is CCA-adding enzyme from Bacillus cereus (strain 03BB102).